The sequence spans 268 residues: 5'-nucleotidase SurE (268 aa).

A divalent metal cation-binding residues include aspartate 8, aspartate 9, serine 40, and asparagine 98.

This sequence belongs to the SurE nucleotidase family. The cofactor is a divalent metal cation.

It localises to the cytoplasm. The enzyme catalyses a ribonucleoside 5'-phosphate + H2O = a ribonucleoside + phosphate. Its function is as follows. Nucleotidase that shows phosphatase activity on nucleoside 5'-monophosphates. The polypeptide is 5'-nucleotidase SurE (Trichodesmium erythraeum (strain IMS101)).